Reading from the N-terminus, the 119-residue chain is Large ribosomal subunit protein bL20c (119 aa).

It belongs to the bacterial ribosomal protein bL20 family.

It localises to the plastid. The protein localises to the chloroplast. Binds directly to 23S ribosomal RNA and is necessary for the in vitro assembly process of the 50S ribosomal subunit. It is not involved in the protein synthesizing functions of that subunit. The polypeptide is Large ribosomal subunit protein bL20c (rpl20) (Oryza sativa (Rice)).